A 474-amino-acid chain; its full sequence is tRNA-2-methylthio-N(6)-dimethylallyladenosine synthase (474 aa).

The MTTase N-terminal domain maps to 3-120 (KKLHIKTWGC…LPEMINSVRG (118 aa)). [4Fe-4S] cluster contacts are provided by Cys12, Cys49, Cys83, Cys157, Cys161, and Cys164. In terms of domain architecture, Radical SAM core spans 143 to 375 (RAEGPTAFVS…QERINQQAMA (233 aa)). In terms of domain architecture, TRAM spans 378-441 (RRMLGTVQRI…TNSLRGKIVR (64 aa)).

Belongs to the methylthiotransferase family. MiaB subfamily. In terms of assembly, monomer. [4Fe-4S] cluster serves as cofactor.

The protein resides in the cytoplasm. The catalysed reaction is N(6)-dimethylallyladenosine(37) in tRNA + (sulfur carrier)-SH + AH2 + 2 S-adenosyl-L-methionine = 2-methylsulfanyl-N(6)-dimethylallyladenosine(37) in tRNA + (sulfur carrier)-H + 5'-deoxyadenosine + L-methionine + A + S-adenosyl-L-homocysteine + 2 H(+). Functionally, catalyzes the methylthiolation of N6-(dimethylallyl)adenosine (i(6)A), leading to the formation of 2-methylthio-N6-(dimethylallyl)adenosine (ms(2)i(6)A) at position 37 in tRNAs that read codons beginning with uridine. This Klebsiella pneumoniae subsp. pneumoniae (strain ATCC 700721 / MGH 78578) protein is tRNA-2-methylthio-N(6)-dimethylallyladenosine synthase.